Consider the following 600-residue polypeptide: Long-chain-fatty-acid--CoA ligase FadD15 (600 aa).

The protein belongs to the ATP-dependent AMP-binding enzyme family.

The enzyme catalyses a long-chain fatty acid + ATP + CoA = a long-chain fatty acyl-CoA + AMP + diphosphate. The catalysed reaction is dodecanoate + ATP + CoA = dodecanoyl-CoA + AMP + diphosphate. It catalyses the reaction hexadecanoate + ATP + CoA = hexadecanoyl-CoA + AMP + diphosphate. It functions in the pathway lipid metabolism; fatty acid biosynthesis. Functionally, catalyzes the activation of long-chain fatty acids as acyl-coenzyme A (acyl-CoA), which are then transferred to the multifunctional polyketide synthase (PKS) type III for further chain extension. The polypeptide is Long-chain-fatty-acid--CoA ligase FadD15 (fadD15) (Mycobacterium tuberculosis (strain ATCC 25618 / H37Rv)).